Here is a 599-residue protein sequence, read N- to C-terminus: Elongation factor 4 (599 aa).

In terms of domain architecture, tr-type G spans 2–185; that stretch reads ENIRNFSIIA…AITKRIPPPK (184 aa). GTP is bound by residues 14–19 and 132–135; these read DHGKST and NKID.

This sequence belongs to the TRAFAC class translation factor GTPase superfamily. Classic translation factor GTPase family. LepA subfamily.

It is found in the cell inner membrane. It carries out the reaction GTP + H2O = GDP + phosphate + H(+). Its function is as follows. Required for accurate and efficient protein synthesis under certain stress conditions. May act as a fidelity factor of the translation reaction, by catalyzing a one-codon backward translocation of tRNAs on improperly translocated ribosomes. Back-translocation proceeds from a post-translocation (POST) complex to a pre-translocation (PRE) complex, thus giving elongation factor G a second chance to translocate the tRNAs correctly. Binds to ribosomes in a GTP-dependent manner. The polypeptide is Elongation factor 4 (Hydrogenobaculum sp. (strain Y04AAS1)).